The primary structure comprises 1505 residues: Anaphase-promoting complex subunit 1 (1505 aa).

It belongs to the APC1 family. The APC/C complex is probably composed of at least 12 subunits: apc-2, apc-10, apc-11, cdc-26, emb-1, emb-27, emb-30, mat-1, mat-2, mat-3, such-1 and gfi-3.

It functions in the pathway protein modification; protein ubiquitination. Probable component of the anaphase promoting complex/cyclosome (APC/C), a cell cycle-regulated E3 ubiquitin ligase that controls progression through mitosis and the G1 phase of the cell cycle. The APC/C complex acts by mediating ubiquitination and subsequent degradation of target proteins. Developmental role in early embryogenesis and the metaphase to anaphase transition in oocyte and spermatocyte meiosis and mitosis in germ cells. Required for embryonic anterior-posterior axis formation. Plays a role in regulating the abundance of glr-1 receptors in postmitotic neurons, which may in turn control animal locomotion. Involved in regulating GABA neurotransmitter release at neuromuscular junctions in GABA motor neurons. This Caenorhabditis elegans protein is Anaphase-promoting complex subunit 1.